We begin with the raw amino-acid sequence, 311 residues long: Mediator of RNA polymerase II transcription subunit 27 (311 aa).

The protein belongs to the Mediator complex subunit 27 family. Component of the Mediator complex.

The protein localises to the nucleus. In terms of biological role, component of the Mediator complex, a coactivator involved in the regulated transcription of nearly all RNA polymerase II-dependent genes. Mediator functions as a bridge to convey information from gene-specific regulatory proteins to the basal RNA polymerase II transcription machinery. Mediator is recruited to promoters by direct interactions with regulatory proteins and serves as a scaffold for the assembly of a functional preinitiation complex with RNA polymerase II and the general transcription factors. This chain is Mediator of RNA polymerase II transcription subunit 27 (med27), found in Xenopus tropicalis (Western clawed frog).